Here is a 209-residue protein sequence, read N- to C-terminus: Redox-sensing transcriptional repressor Rex (209 aa).

Positions 16–55 (LYYRFIQNLSLSGKQRVSSAELSEAVKVDSATIRRDFSYF) form a DNA-binding region, H-T-H motif. 90-95 (GVGNLG) is an NAD(+) binding site.

This sequence belongs to the transcriptional regulatory Rex family. In terms of assembly, homodimer.

It localises to the cytoplasm. Modulates transcription in response to changes in cellular NADH/NAD(+) redox state. The polypeptide is Redox-sensing transcriptional repressor Rex (Bacillus cereus (strain ATCC 10987 / NRS 248)).